The primary structure comprises 661 residues: Chermesin D/asnovolin J monooxidase nvfH (661 aa).

Asn12 carries N-linked (GlcNAc...) asparagine glycosylation. A helical transmembrane segment spans residues 89–111; sequence VLIIGAGYGGLLFAVRIIQTGAF. FAD is bound by residues 128 to 131, 140 to 141, and Tyr146; these read TWYW and DV. 138–140 contacts NADP(+); sequence MCD. Residues 286–292 and 309–310 contribute to the NADP(+) site; these read TGATAIQ and RT. Residues Asn382 and Asn538 are each glycosylated (N-linked (GlcNAc...) asparagine).

It belongs to the FAD-binding monooxygenase family. FAD serves as cofactor.

It is found in the membrane. The catalysed reaction is chermesin D + AH2 + O2 = asnovolin I + A + H2O. It catalyses the reaction asnovolin J + AH2 + O2 = asnovolin A + A + H2O. It functions in the pathway secondary metabolite biosynthesis; terpenoid biosynthesis. In terms of biological role, chermesin D/asnovolin J monooxidase; part of the gene cluster that mediates the biosynthesis of novofumigatonin, a heavily oxygenated meroterpenoid containing a unique orthoester moiety. The first step of the pathway is the synthesis of 3,5-dimethylorsellinic acid (DMOA) by the polyketide synthase nvfA via condensation of one acetyl-CoA starter unit with 3 malonyl-CoA units and 2 methylations. DMOA is then converted to farnesyl-DMOA by the farnesyltransferase nvfB. Epoxydation by FAD-dependent monooxygenase nvfK, followed by a protonation-initiated cyclization catalyzed by the terpene cyclase nvfL leads to the production of asnavolin H. The short chain dehydrogenase nvfC then as a 3-OH dehydrogenase of asnovolin H to yield chemesin D. There are two branches to synthesize asnovolin A from chemesin D. In one branch, chemesin D undergoes Baeyer-Villiger oxidation by nvfH, methylation by nvfJ, and enoyl reduction by the nvfM D enoylreductase that reduces the double bond between C-5'and C-6', to form respectively asnovolin I, asnovolin K, and asnovolin A. In the other branch, the methylation precedes the Baeyer-Villiger oxidation and the enoyl reduction to yield asnovolin A via the asnovolin J intermediate. Asnovolin A is further converted to fumigatonoid A by the Fe(II)/2-oxoglutarate-dependent dioxygenase nvfI that catalyzes an endoperoxidation reaction. The alpha/beta hydrolase nvfD then acts as an epimerase that converts fumigatonoid A to its C-5' epimer, which then undergoes spontaneous or nvfD-catalyzed lactonization. The following step utilizes the ketoreductase nvfG to produce fumigatonoid B. The dioxygenase nvfE further converts fumigatonoid B into fumigatonoid C. Finally the Fe(II)/2-oxoglutarate-dependent dioxygenase nvfF catalyzes two rounds of oxidation to transform fumigatonoid C into the end product, novofumigatonin A. This chain is Chermesin D/asnovolin J monooxidase nvfH, found in Aspergillus novofumigatus (strain IBT 16806).